Reading from the N-terminus, the 323-residue chain is Beta-ketoacyl-[acyl-carrier-protein] synthase III (323 aa).

Catalysis depends on residues Cys113 and His250. Positions 251-255 (QANKR) are ACP-binding. The active site involves Asn280.

The protein belongs to the thiolase-like superfamily. FabH family. In terms of assembly, homodimer.

It is found in the cytoplasm. It carries out the reaction malonyl-[ACP] + acetyl-CoA + H(+) = 3-oxobutanoyl-[ACP] + CO2 + CoA. The protein operates within lipid metabolism; fatty acid biosynthesis. Its function is as follows. Catalyzes the condensation reaction of fatty acid synthesis by the addition to an acyl acceptor of two carbons from malonyl-ACP. Catalyzes the first condensation reaction which initiates fatty acid synthesis and may therefore play a role in governing the total rate of fatty acid production. Possesses both acetoacetyl-ACP synthase and acetyl transacylase activities. Its substrate specificity determines the biosynthesis of branched-chain and/or straight-chain of fatty acids. This Chelativorans sp. (strain BNC1) protein is Beta-ketoacyl-[acyl-carrier-protein] synthase III.